The primary structure comprises 120 residues: Protein Wnt-9 (120 aa).

A lipid anchor (O-palmitoleoyl serine; by PORCN) is attached at Ser1. Cys90 and Cys101 are oxidised to a cystine.

This sequence belongs to the Wnt family. Palmitoleoylation is required for efficient binding to frizzled receptors. Depalmitoleoylation leads to Wnt signaling pathway inhibition.

The protein localises to the secreted. It is found in the extracellular space. It localises to the extracellular matrix. Functionally, ligand for members of the frizzled family of seven transmembrane receptors. Probable developmental protein. May be a signaling molecule which affects the development of discrete regions of tissues. Is likely to signal over only few cell diameters. The polypeptide is Protein Wnt-9 (WNT-9) (Alopias vulpinus (Common thresher shark)).